The chain runs to 180 residues: Large ribosomal subunit protein uL6 (180 aa).

The protein belongs to the universal ribosomal protein uL6 family. In terms of assembly, part of the 50S ribosomal subunit.

Functionally, this protein binds to the 23S rRNA, and is important in its secondary structure. It is located near the subunit interface in the base of the L7/L12 stalk, and near the tRNA binding site of the peptidyltransferase center. The protein is Large ribosomal subunit protein uL6 of Picrophilus torridus (strain ATCC 700027 / DSM 9790 / JCM 10055 / NBRC 100828 / KAW 2/3).